The following is a 331-amino-acid chain: Adenosine deaminase (331 aa).

Positions 12 and 14 each coordinate Zn(2+). Substrate is bound by residues His14, Asp16, and Gly170. Position 197 (His197) interacts with Zn(2+). The active-site Proton donor is the Glu200. Asp278 is a binding site for Zn(2+).

It belongs to the metallo-dependent hydrolases superfamily. Adenosine and AMP deaminases family. Adenosine deaminase subfamily. The cofactor is Zn(2+).

It carries out the reaction adenosine + H2O + H(+) = inosine + NH4(+). It catalyses the reaction 2'-deoxyadenosine + H2O + H(+) = 2'-deoxyinosine + NH4(+). In terms of biological role, catalyzes the hydrolytic deamination of adenosine and 2-deoxyadenosine. The sequence is that of Adenosine deaminase from Shewanella woodyi (strain ATCC 51908 / MS32).